A 138-amino-acid polypeptide reads, in one-letter code: MAVLPDKEKLLRNFLRCANWEEKYLYIIELGQRMPELHDEDKSPQNSVQGCQSQVWIVMRQNAQGIIELQGDSDAAIVKGLIAVVFILYDQMTPQDIVNFDVRPWFEKMALTQHLTPSRSQGLEAMIRAIRAKAAALS.

Cys51 acts as the Cysteine persulfide intermediate in catalysis.

The protein belongs to the SufE family. Homodimer. Interacts with SufS.

It is found in the cytoplasm. It functions in the pathway cofactor biosynthesis; iron-sulfur cluster biosynthesis. Participates in cysteine desulfuration mediated by SufS. Cysteine desulfuration mobilizes sulfur from L-cysteine to yield L-alanine and constitutes an essential step in sulfur metabolism for biosynthesis of a variety of sulfur-containing biomolecules. Functions as a sulfur acceptor for SufS, by mediating the direct transfer of the sulfur atom from the S-sulfanylcysteine of SufS, an intermediate product of cysteine desulfuration process. The sequence is that of Cysteine desulfuration protein SufE from Escherichia fergusonii (strain ATCC 35469 / DSM 13698 / CCUG 18766 / IAM 14443 / JCM 21226 / LMG 7866 / NBRC 102419 / NCTC 12128 / CDC 0568-73).